We begin with the raw amino-acid sequence, 399 residues long: Aspartate aminotransferase (399 aa).

G42 and N179 together coordinate L-aspartate. K240 bears the N6-(pyridoxal phosphate)lysine mark. R372 provides a ligand contact to L-aspartate.

This sequence belongs to the class-I pyridoxal-phosphate-dependent aminotransferase family. As to quaternary structure, homodimer. Pyridoxal 5'-phosphate is required as a cofactor.

Its subcellular location is the cytoplasm. It catalyses the reaction L-aspartate + 2-oxoglutarate = oxaloacetate + L-glutamate. This Sulfurisphaera tokodaii (strain DSM 16993 / JCM 10545 / NBRC 100140 / 7) (Sulfolobus tokodaii) protein is Aspartate aminotransferase (aspC).